The sequence spans 897 residues: 3'-5' exonuclease DinG (897 aa).

The region spanning 8–161 is the Exonuclease domain; the sequence is VVDLETTGNQ…DEDAATTAKL (154 aa). The region spanning 241 to 496 is the Helicase ATP-binding domain; that stretch reads SKAVDQLGLT…KAIDQLEKQR (256 aa). 276-283 contacts ATP; sequence ASLGSGKS. The short motif at 448-451 is the DEAH box element; sequence DEAH. In terms of domain architecture, Helicase C-terminal spans 703 to 883; sequence NIDEYVASIV…NYRQKKGDIQ (181 aa).

It belongs to the helicase family. DinG subfamily. Type 2 sub-subfamily.

Its function is as follows. 3'-5' exonuclease. The chain is 3'-5' exonuclease DinG from Staphylococcus aureus (strain bovine RF122 / ET3-1).